The following is a 119-amino-acid chain: Large ribosomal subunit protein uL18 (119 aa).

Positions 1 to 20 (MSQIDKASRRQKIKDRSRVK) are disordered. Positions 9–20 (RRQKIKDRSRVK) are enriched in basic residues.

Belongs to the universal ribosomal protein uL18 family. Part of the 50S ribosomal subunit; part of the 5S rRNA/L5/L18/L25 subcomplex. Contacts the 5S and 23S rRNAs.

Functionally, this is one of the proteins that bind and probably mediate the attachment of the 5S RNA into the large ribosomal subunit, where it forms part of the central protuberance. The chain is Large ribosomal subunit protein uL18 from Chlorobium phaeobacteroides (strain DSM 266 / SMG 266 / 2430).